We begin with the raw amino-acid sequence, 89 residues long: Envelope protein US9 (89 aa).

The span at 1-10 (MTSRPADQDS) shows a compositional bias: basic and acidic residues. The tract at residues 1–21 (MTSRPADQDSVRSSASVPLYP) is disordered. At 1–66 (MTSRPADQDS…RRRRTRCVGL (66 aa)) the chain is on the intravirion side. The Internalization motif signature appears at 20 to 23 (YPAA). The tract at residues 29-38 (EAYYSESEDE) is acidic. Phosphoserine; by host CK2 is present on residues Ser-33 and Ser-35. The helical; Signal-anchor for type II membrane protein transmembrane segment at 67–87 (VIACLVVALLSGGFGALLVWL) threads the bilayer. The Virion surface portion of the chain corresponds to 88–89 (LR).

This sequence belongs to the alphaherpesvirinae envelope protein US9 family. Post-translationally, phosphorylated on serines within the acidic cluster, possibly by host CK2. Phosphorylation determines whether endocytosed viral US9 traffics to the trans-Golgi network or recycles to the cell membrane.

The protein localises to the virion membrane. The protein resides in the host Golgi apparatus membrane. It is found in the host smooth endoplasmic reticulum membrane. Its subcellular location is the host cell membrane. Its function is as follows. Essential for the anterograde spread of the infection throughout the host nervous system. Together with the gE/gI heterodimer, US9 is involved in the sorting and transport of viral structural components toward axon tips. The chain is Envelope protein US9 from Homo sapiens (Human).